The following is a 110-amino-acid chain: MMEVTAKLRGAAISAQKARLVADLIRGKSVAHALNILNFSNKKAAVLVKKALESAIANAEHNNSLDVDDLKVSTIYVDEGISLKRIMPRAKGRADRITKRTCHITVKVGV.

It belongs to the universal ribosomal protein uL22 family. As to quaternary structure, part of the 50S ribosomal subunit.

Functionally, this protein binds specifically to 23S rRNA; its binding is stimulated by other ribosomal proteins, e.g. L4, L17, and L20. It is important during the early stages of 50S assembly. It makes multiple contacts with different domains of the 23S rRNA in the assembled 50S subunit and ribosome. Its function is as follows. The globular domain of the protein is located near the polypeptide exit tunnel on the outside of the subunit, while an extended beta-hairpin is found that lines the wall of the exit tunnel in the center of the 70S ribosome. The sequence is that of Large ribosomal subunit protein uL22 from Acinetobacter baylyi (strain ATCC 33305 / BD413 / ADP1).